Consider the following 348-residue polypeptide: Dihydroorotase (348 aa).

The Zn(2+) site is built by His14 and His16. Substrate contacts are provided by residues 16 to 18 (HLR) and Asn42. Zn(2+)-binding residues include Lys100, His137, and His175. N6-carboxylysine is present on Lys100. A substrate-binding site is contributed by His137. Leu220 provides a ligand contact to substrate. Residue Asp248 coordinates Zn(2+). The active site involves Asp248. 2 residues coordinate substrate: His252 and Ala264.

Belongs to the metallo-dependent hydrolases superfamily. DHOase family. Class II DHOase subfamily. As to quaternary structure, homodimer. Zn(2+) serves as cofactor.

The enzyme catalyses (S)-dihydroorotate + H2O = N-carbamoyl-L-aspartate + H(+). The protein operates within pyrimidine metabolism; UMP biosynthesis via de novo pathway; (S)-dihydroorotate from bicarbonate: step 3/3. Functionally, catalyzes the reversible cyclization of carbamoyl aspartate to dihydroorotate. The sequence is that of Dihydroorotase from Pseudomonas paraeruginosa (strain DSM 24068 / PA7) (Pseudomonas aeruginosa (strain PA7)).